The following is a 196-amino-acid chain: Large ribosomal subunit protein uL10 (196 aa).

The interval 169–196 (KAAECPAEAPQPAAETPAEAPEAPADAE) is disordered. Residues 172 to 196 (ECPAEAPQPAAETPAEAPEAPADAE) show a composition bias toward low complexity.

The protein belongs to the universal ribosomal protein uL10 family. Part of the ribosomal stalk of the 50S ribosomal subunit. The N-terminus interacts with L11 and the large rRNA to form the base of the stalk. The C-terminus forms an elongated spine to which L12 dimers bind in a sequential fashion forming a multimeric L10(L12)X complex.

In terms of biological role, forms part of the ribosomal stalk, playing a central role in the interaction of the ribosome with GTP-bound translation factors. The protein is Large ribosomal subunit protein uL10 of Mycobacterium avium (strain 104).